The primary structure comprises 346 residues: Selenoprotein V (346 aa).

Disordered regions lie at residues 1–40 and 151–206; these read MNNQARTPAPSSARTSTSVRASTPTRTPTPLRTPTPVRTR and LDPP…PGPT. The span at 151–162 shows a compositional bias: pro residues; the sequence is LDPPPEPAPELP. A cross-link (cysteinyl-selenocysteine (Cys-Sec); redox-active) is located at residues 270–273; sequence CGLU. Position 273 (U273) is a non-standard amino acid, selenocysteine.

This sequence belongs to the SelWTH family. In terms of processing, truncated SELENOV proteins produced by failed UGA/Sec decoding are ubiquitinated by the CRL2(APPBP2) complex, which recognizes the glycine (Gly) at the C-terminus of truncated SELENOV proteins. In terms of tissue distribution, testis specific.

May be involved in a redox-related process. This chain is Selenoprotein V, found in Homo sapiens (Human).